We begin with the raw amino-acid sequence, 624 residues long: LRR receptor kinase BAK1 (624 aa).

The N-terminal stretch at 1 to 25 (MAAHRWAVWAVLLLRLLVPAARVLA) is a signal peptide. The Extracellular portion of the chain corresponds to 26 to 237 (NMEGDALHSL…QSPGSSSSTG (212 aa)). LRR repeat units lie at residues 91 to 115 (LKNLQYLELYSNNISGTIPSELGNL), 117 to 139 (NLVSLDLYLNNFTGPIPDSLGNL), 140 to 163 (LKLRFLRLNNNSLSGSIPKSLTAI), and 164 to 188 (TALQVLDLSNNNLSGEVPSTGSFSL). N-linked (GlcNAc...) asparagine glycans are attached at residues N103, N114, N127, N149, and N175. The tract at residues 205-236 (TTKPCPGAPPFSPPPPYNPPTPVQSPGSSSST) is disordered. The span at 210–227 (PGAPPFSPPPPYNPPTPV) shows a compositional bias: pro residues. A helical transmembrane segment spans residues 238–258 (AIAGGVAAGAALLFAIPAIGF). Over 259–624 (AWYRRRKPQE…LHAVELSGPR (366 aa)) the chain is Cytoplasmic. The Protein kinase domain occupies 301-588 (FSNKNILGRG…GLAERWEEWQ (288 aa)). Residues 307–315 (LGRGGFGKV) and K329 each bind ATP. D428 (proton acceptor) is an active-site residue.

This sequence belongs to the protein kinase superfamily. Ser/Thr protein kinase family. As to quaternary structure, forms homodimers. Interacts with BRI1. Interacts with REM4.1. In terms of tissue distribution, expressed in developing lateral roots, shoot apex, leaf blades, lamina joints and flowers. Expressed at low levels in leaf sheaths and panicles.

The protein localises to the cell membrane. It carries out the reaction L-seryl-[protein] + ATP = O-phospho-L-seryl-[protein] + ADP + H(+). The catalysed reaction is L-threonyl-[protein] + ATP = O-phospho-L-threonyl-[protein] + ADP + H(+). In terms of biological role, LRR receptor kinase involved in defense response. Does not seem to be required specifically for XA21-mediated immunity or basal resistance to Xanthomonas oryzae pv. oryzae (Xoo), or immunity to Magnaporthe oryzae. Involved in brassinosteroid (BR) signaling pathway. Acts as a coreceptor of BRI1. Forms at the plasma membrane a receptor complex with BRI1 which is activated in response to brassinolide. Phosphorylates BRI1. Required for normal plant growth and leaf development. Possesses kinase activity in vitro. The polypeptide is LRR receptor kinase BAK1 (Oryza sativa subsp. japonica (Rice)).